A 298-amino-acid polypeptide reads, in one-letter code: Cholesterol 25-hydroxylase (298 aa).

N-linked (GlcNAc...) asparagine glycosylation occurs at N5. The next 3 helical transmembrane spans lie at I38 to L58, L88 to V108, and L124 to L144. In terms of domain architecture, Fatty acid hydroxylase spans V128–T263. The short motif at W142–H146 is the Histidine box-1 element. The Histidine box-2 signature appears at H157–H161. N-linked (GlcNAc...) asparagine glycosylation is present at N163. The short motif at H238–S244 is the Histidine box-3 element.

It belongs to the sterol desaturase family. It depends on Fe cation as a cofactor. Post-translationally, N-glycosylated. Widely expressed at low level and at higher level in the lung. Weakly expressed in the heart, lung and kidney.

The protein localises to the endoplasmic reticulum membrane. It carries out the reaction cholesterol + AH2 + O2 = 25-hydroxycholesterol + A + H2O. The enzyme catalyses cholesterol + NADPH + O2 + H(+) = 25-hydroxycholesterol + NADP(+) + H2O. In terms of biological role, catalyzes the formation of 25-hydroxycholesterol from cholesterol, leading to repress cholesterol biosynthetic enzymes. Plays a key role in cell positioning and movement in lymphoid tissues: 25-hydroxycholesterol is an intermediate in biosynthesis of 7-alpha,25-dihydroxycholesterol (7-alpha,25-OHC), an oxysterol that acts as a ligand for the G protein-coupled receptor GPR183/EBI2, a chemotactic receptor for a number of lymphoid cells. May play an important role in regulating lipid metabolism by synthesizing a corepressor that blocks sterol regulatory element binding protein (SREBP) processing. In testis, production of 25-hydroxycholesterol by macrophages may play a role in Leydig cell differentiation. Required to restrain inflammation in macrophages: production of 25-hydroxycholesterol protects macrophages from cholesterol overload, thereby preventing mitochondrial DNA release and subsequent activation of the AIM2 inflammasome. Interferon-stimulated gene which has broad antiviral activities against a wide range of enveloped viruses. This is Cholesterol 25-hydroxylase from Mus musculus (Mouse).